The following is a 98-amino-acid chain: NADH-ubiquinone oxidoreductase chain 4L (98 aa).

A run of 3 helical transmembrane segments spans residues 1 to 21 (MTLIHMNIIMAFSMSLVGLLM), 29 to 49 (ALLCLEGMMLSLFVLAALTIL), and 61 to 81 (IILLVFAACEAAIGLALLVTI).

It belongs to the complex I subunit 4L family. Core subunit of respiratory chain NADH dehydrogenase (Complex I) which is composed of 45 different subunits.

It is found in the mitochondrion inner membrane. The catalysed reaction is a ubiquinone + NADH + 5 H(+)(in) = a ubiquinol + NAD(+) + 4 H(+)(out). In terms of biological role, core subunit of the mitochondrial membrane respiratory chain NADH dehydrogenase (Complex I) which catalyzes electron transfer from NADH through the respiratory chain, using ubiquinone as an electron acceptor. Part of the enzyme membrane arm which is embedded in the lipid bilayer and involved in proton translocation. The sequence is that of NADH-ubiquinone oxidoreductase chain 4L (MT-ND4L) from Eubalaena australis (Southern right whale).